The sequence spans 646 residues: Cell surface glycoprotein MUC18 (646 aa).

A signal peptide spans 1-23 (MGLPRLVCAFLLAACCCCPRVAG). 2 consecutive Ig-like V-type domains span residues 24–129 (VPGE…YRIQ) and 139–242 (PNIQ…REVT). At 24-559 (VPGEAEQPAP…RKLPEPESRG (536 aa)) the chain is on the extracellular side. 4 disulfides stabilise this stretch: C48-C116, C161-C223, C272-C320, and C365-C407. Residue N56 is glycosylated (N-linked (GlcNAc...) asparagine). Ig-like C2-type domains are found at residues 244–330 (PVFY…TMIS), 335–424 (PQEL…QLVN), and 430–510 (PPWM…KNTS). Residues 278 to 299 (PPPHFSISKQNPSTREAEEETT) form a disordered region. N418, N449, N467, N508, N518, N527, and N544 each carry an N-linked (GlcNAc...) asparagine glycan. Residues C452 and C499 are joined by a disulfide bond. The disordered stretch occupies residues 525–554 (DSNTTTGLSTSTASPHTRANSTSTERKLPE). Residues 533–547 (STSTASPHTRANSTS) show a composition bias toward polar residues. A helical membrane pass occupies residues 560-583 (VVIVAVIVCILVLAVLGAVLYFLY). Over 584–646 (KKGKLPCRRS…QGEKYIDLRH (63 aa)) the chain is Cytoplasmic. S606, S614, and S628 each carry phosphoserine. A disordered region spans residues 620 to 646 (EMGLLQGSSGDKRAPGDQGEKYIDLRH). A compositionally biased stretch (basic and acidic residues) spans 629–646 (GDKRAPGDQGEKYIDLRH).

As to expression, detected in endothelial cells in vascular tissue throughout the body. May appear at the surface of neural crest cells during their embryonic migration. Appears to be limited to vascular smooth muscle in normal adult tissues. Associated with tumor progression and the development of metastasis in human malignant melanoma. Expressed most strongly on metastatic lesions and advanced primary tumors and is only rarely detected in benign melanocytic nevi and thin primary melanomas with a low probability of metastasis.

The protein resides in the membrane. Functionally, plays a role in cell adhesion, and in cohesion of the endothelial monolayer at intercellular junctions in vascular tissue. Its expression may allow melanoma cells to interact with cellular elements of the vascular system, thereby enhancing hematogeneous tumor spread. Could be an adhesion molecule active in neural crest cells during embryonic development. Acts as a surface receptor that triggers tyrosine phosphorylation of FYN and PTK2/FAK1, and a transient increase in the intracellular calcium concentration. This Homo sapiens (Human) protein is Cell surface glycoprotein MUC18 (MCAM).